A 345-amino-acid polypeptide reads, in one-letter code: Phosphoribosylformylglycinamidine cyclo-ligase (345 aa).

It belongs to the AIR synthase family.

The protein localises to the cytoplasm. It carries out the reaction 2-formamido-N(1)-(5-O-phospho-beta-D-ribosyl)acetamidine + ATP = 5-amino-1-(5-phospho-beta-D-ribosyl)imidazole + ADP + phosphate + H(+). It functions in the pathway purine metabolism; IMP biosynthesis via de novo pathway; 5-amino-1-(5-phospho-D-ribosyl)imidazole from N(2)-formyl-N(1)-(5-phospho-D-ribosyl)glycinamide: step 2/2. The chain is Phosphoribosylformylglycinamidine cyclo-ligase from Escherichia coli O7:K1 (strain IAI39 / ExPEC).